The primary structure comprises 445 residues: tRNA-2-methylthio-N(6)-dimethylallyladenosine synthase (445 aa).

Positions 13 to 129 constitute an MTTase N-terminal domain; that stretch reads KKLFIKTYGC…LPAMARAGRG (117 aa). Residues Cys-22, Cys-58, Cys-92, Cys-163, Cys-167, and Cys-170 each contribute to the [4Fe-4S] cluster site. Residues 149–383 enclose the Radical SAM core domain; the sequence is TRRAPAAFLT…LTSQQKAAQE (235 aa). The region spanning 383–445 is the TRAM domain; sequence EGMVGRELGV…PNSLAGVLAA (63 aa).

This sequence belongs to the methylthiotransferase family. MiaB subfamily. Monomer. The cofactor is [4Fe-4S] cluster.

The protein localises to the cytoplasm. The enzyme catalyses N(6)-dimethylallyladenosine(37) in tRNA + (sulfur carrier)-SH + AH2 + 2 S-adenosyl-L-methionine = 2-methylsulfanyl-N(6)-dimethylallyladenosine(37) in tRNA + (sulfur carrier)-H + 5'-deoxyadenosine + L-methionine + A + S-adenosyl-L-homocysteine + 2 H(+). In terms of biological role, catalyzes the methylthiolation of N6-(dimethylallyl)adenosine (i(6)A), leading to the formation of 2-methylthio-N6-(dimethylallyl)adenosine (ms(2)i(6)A) at position 37 in tRNAs that read codons beginning with uridine. The chain is tRNA-2-methylthio-N(6)-dimethylallyladenosine synthase from Paracoccus denitrificans (strain Pd 1222).